A 349-amino-acid polypeptide reads, in one-letter code: tRNA pseudouridine synthase D (349 aa).

F27 is a substrate binding site. Catalysis depends on D80, which acts as the Nucleophile. Substrate is bound at residue N129. One can recognise a TRUD domain in the interval 155 to 303 (GVPNYFGAQR…VEAARRAMLL (149 aa)). F329 lines the substrate pocket.

It belongs to the pseudouridine synthase TruD family.

The catalysed reaction is uridine(13) in tRNA = pseudouridine(13) in tRNA. Responsible for synthesis of pseudouridine from uracil-13 in transfer RNAs. This Escherichia coli (strain SE11) protein is tRNA pseudouridine synthase D.